The sequence spans 256 residues: Thiazole synthase (256 aa).

Lys95 acts as the Schiff-base intermediate with DXP in catalysis. Residues Gly156, 182–183 (AG), and 204–205 (NT) contribute to the 1-deoxy-D-xylulose 5-phosphate site.

Belongs to the ThiG family. In terms of assembly, homotetramer. Forms heterodimers with either ThiH or ThiS.

It is found in the cytoplasm. It carries out the reaction [ThiS sulfur-carrier protein]-C-terminal-Gly-aminoethanethioate + 2-iminoacetate + 1-deoxy-D-xylulose 5-phosphate = [ThiS sulfur-carrier protein]-C-terminal Gly-Gly + 2-[(2R,5Z)-2-carboxy-4-methylthiazol-5(2H)-ylidene]ethyl phosphate + 2 H2O + H(+). It participates in cofactor biosynthesis; thiamine diphosphate biosynthesis. Catalyzes the rearrangement of 1-deoxy-D-xylulose 5-phosphate (DXP) to produce the thiazole phosphate moiety of thiamine. Sulfur is provided by the thiocarboxylate moiety of the carrier protein ThiS. In vitro, sulfur can be provided by H(2)S. This is Thiazole synthase from Salmonella typhi.